Reading from the N-terminus, the 235-residue chain is MNRLLNEKVEEFKKGVLKAGWFIEKMFRNSISSLVERNESLAREVIADEEVVDQMEVEIQEKAMEVLGLFSPIGKPLLTVTAGIRVAELIENIADKCHDIAKNVLELMEEPPLKPLEDIPAMANQTSEMLKFALRMFADVNVEKSFEVCRMDSKVDDLYEKVREELLLYMMESPKYVKRALLLLEIAGNIEIIADYATNIVEVSVYMVQGEAYKCYHDELLLFKKSGGVLFESSD.

Belongs to the PhoU family. As to quaternary structure, homodimer.

It is found in the cytoplasm. Plays a role in the regulation of phosphate uptake. This is Phosphate-specific transport system accessory protein PhoU homolog 2 (phoU2) from Thermotoga maritima (strain ATCC 43589 / DSM 3109 / JCM 10099 / NBRC 100826 / MSB8).